The following is a 202-amino-acid chain: Osteoclast-stimulating factor 1 (202 aa).

An SH3 domain is found at 12 to 71 (GQVKVFRALYTFEPRTPDELYFEEGDIIYISDMSDTNWWKGTCKGRTGLIPSNYVAEQAE). ANK repeat units lie at residues 72 to 101 (SIDN…GVNG), 105 to 135 (AGNT…ELNQ), and 139 to 168 (LGDT…RTDL).

Its subcellular location is the cytoplasm. Induces bone resorption, acting probably through a signaling cascade which results in the secretion of factor(s) enhancing osteoclast formation and activity. In Gallus gallus (Chicken), this protein is Osteoclast-stimulating factor 1 (OSTF1).